The chain runs to 529 residues: MADADARAPPKSDPGATPIGSISPSSAAPAAGEDEVEVEVEVEEQLAGLAIADQGEELLLPKPTGWEDGPVVVAGDEVSGGEKLPGEVAAAVGVEGAAADSRPRFPRRPGEPDCTYYVKFGSCRFGMKCKFNHPARKKKSRVKGSNGGSGSGGSNSSSNKASSPDDEQQAPKEEYGSYVPDISPEVDSLGFADKGSASNLENFKKYSYEIIDVKKGRVEPKELKVAKEKRKEFISEGSSQEECKYYSTPGGCKFGKACKYLHRDGKEGKTDAEKVDLNFLGLPLRPGEKECPYYMRTGSCKYATNCKFHHPDPSNVASKDPQLEHENGDAPQQDVQGSSSQPNASIWPDQRTVNEHHVPFIAPSPSYSAGMLPPQGMYPPPEWNGYHQVPLNPYYPPGVPFQHFPAAPINHPMYKAPEIPGHQQVPSEEYPERPGQPECQHFVKSGFCKFRMKCKYHHPRSPVPPAGALSPLGLPIKPDQPVCTYYGRYGVCKFGPACAYNHPFNFSPVPAAGPPLLPAQYPTPGNYTL.

Positions 1 to 10 (MADADARAPP) are enriched in basic and acidic residues. Disordered stretches follow at residues 1 to 36 (MADADARAPPKSDPGATPIGSISPSSAAPAAGEDEV) and 134 to 179 (PARK…GSYV). Over residues 14 to 31 (PGATPIGSISPSSAAPAA) the composition is skewed to low complexity. C3H1-type zinc fingers lie at residues 108 to 136 (RPGEPDCTYYVKFGSCRFGMKCKFNHPAR), 237 to 265 (GSSQEECKYYSTPGGCKFGKACKYLHRDG), and 285 to 313 (RPGEKECPYYMRTGSCKYATNCKFHHPDP). The segment at 313-347 (PSNVASKDPQLEHENGDAPQQDVQGSSSQPNASIW) is disordered. The span at 333-344 (QDVQGSSSQPNA) shows a compositional bias: polar residues. 2 C3H1-type zinc fingers span residues 433–461 (RPGQPECQHFVKSGFCKFRMKCKYHHPRS) and 477–505 (KPDQPVCTYYGRYGVCKFGPACAYNHPFN).

The polypeptide is Zinc finger CCCH domain-containing protein 65 (Oryza sativa subsp. japonica (Rice)).